A 111-amino-acid chain; its full sequence is Phosphoribosyl-ATP pyrophosphatase (111 aa).

It belongs to the PRA-PH family.

The protein localises to the cytoplasm. The catalysed reaction is 1-(5-phospho-beta-D-ribosyl)-ATP + H2O = 1-(5-phospho-beta-D-ribosyl)-5'-AMP + diphosphate + H(+). It participates in amino-acid biosynthesis; L-histidine biosynthesis; L-histidine from 5-phospho-alpha-D-ribose 1-diphosphate: step 2/9. This is Phosphoribosyl-ATP pyrophosphatase from Pseudomonas putida (strain GB-1).